Reading from the N-terminus, the 795-residue chain is Nucleolar complex protein 3 homolog (795 aa).

Disordered regions lie at residues 1-88, 124-144, and 168-190; these read MKPM…PLDM, RDDVINKYEKMPRKSKSEPEK, and IPSEEQEENEEEMDTEHTEEVPE. Basic and acidic residues-rich tracts occupy residues 22-39 and 46-58; these read LKLDNKLKNKQFKQESSA and QKQLREAVRDVRS. Residues 74–88 show a composition bias toward acidic residues; that stretch reads EEEYEVEEESLPLDM. Over residues 171–181 the composition is skewed to acidic residues; that stretch reads EEQEENEEEMD. A coiled-coil region spans residues 447 to 492; sequence SYKDKKKNLSRMQRKWKKAEEKLERELLEAEASESKEKKLKLNTET.

It belongs to the CBF/MAK21 family.

It is found in the nucleus. Its subcellular location is the nucleolus. This is Nucleolar complex protein 3 homolog (noc3l) from Xenopus laevis (African clawed frog).